A 180-amino-acid chain; its full sequence is Inner membrane-spanning protein YciB (180 aa).

Helical transmembrane passes span 4–24, 25–45, 49–69, 76–96, 118–138, and 150–170; these read LLSEIGPVIAFFAGFFYGGGI, QSATLYMLITSIICITLCYII, VSKLSIISSTVLFVSGIITLI, IKIKPTILYVIFGIIFLMSGI, IILSYRTAAFFFFMAVVNEVV, and FKVFGVIPITFIFILLQLPLL.

Belongs to the YciB family.

It localises to the cell inner membrane. Its function is as follows. Plays a role in cell envelope biogenesis, maintenance of cell envelope integrity and membrane homeostasis. In Rickettsia typhi (strain ATCC VR-144 / Wilmington), this protein is Inner membrane-spanning protein YciB.